The sequence spans 657 residues: 9-cis-epoxycarotenoid dioxygenase NCED9, chloroplastic (657 aa).

Residues His-357, His-406, His-471, and His-642 each contribute to the Fe cation site.

Belongs to the carotenoid oxygenase family. Requires Fe(2+) as cofactor. As to expression, expressed in developing siliques, embryo and endosperm.

It localises to the plastid. The protein resides in the chloroplast stroma. The catalysed reaction is a 9-cis-epoxycarotenoid + O2 = a 12'-apo-carotenal + 2-cis,4-trans-xanthoxin. The enzyme catalyses 9-cis-violaxanthin + O2 = (3S,5R,6S)-5,6-epoxy-3-hydroxy-5,6-dihydro-12'-apo-beta-caroten-12'-al + 2-cis,4-trans-xanthoxin. It catalyses the reaction 9'-cis-neoxanthin + O2 = (3S,5R,6R)-3,5-dihydroxy-6,7-didehydro-5,6-dihydro-12'-apo-beta-caroten-12'-al + 2-cis,4-trans-xanthoxin. Its function is as follows. Has a 11,12(11',12') 9-cis epoxycarotenoid cleavage activity. Catalyzes the first step of abscisic-acid biosynthesis from carotenoids. Contributes probably to abscisic acid synthesis for the induction of seed dormancy. The chain is 9-cis-epoxycarotenoid dioxygenase NCED9, chloroplastic (NCED9) from Arabidopsis thaliana (Mouse-ear cress).